The primary structure comprises 151 residues: Putative pre-16S rRNA nuclease (151 aa).

Belongs to the YqgF nuclease family.

Its subcellular location is the cytoplasm. Its function is as follows. Could be a nuclease involved in processing of the 5'-end of pre-16S rRNA. This chain is Putative pre-16S rRNA nuclease, found in Chlamydia pneumoniae (Chlamydophila pneumoniae).